Consider the following 341-residue polypeptide: L-threonine 3-dehydrogenase (341 aa).

Residue Cys-38 participates in Zn(2+) binding. Residues Thr-40 and His-43 each act as charge relay system in the active site. Residues His-63, Glu-64, Cys-93, Cys-96, Cys-99, and Cys-107 each contribute to the Zn(2+) site. Residues Ile-175, Asp-195, Arg-200, 262 to 264 (LGI), and 286 to 287 (IY) contribute to the NAD(+) site.

This sequence belongs to the zinc-containing alcohol dehydrogenase family. Homotetramer. Zn(2+) is required as a cofactor.

Its subcellular location is the cytoplasm. The enzyme catalyses L-threonine + NAD(+) = (2S)-2-amino-3-oxobutanoate + NADH + H(+). It participates in amino-acid degradation; L-threonine degradation via oxydo-reductase pathway; glycine from L-threonine: step 1/2. Catalyzes the NAD(+)-dependent oxidation of L-threonine to 2-amino-3-ketobutyrate. This is L-threonine 3-dehydrogenase from Shewanella baltica (strain OS185).